Here is a 129-residue protein sequence, read N- to C-terminus: D-ribose pyranase (129 aa).

The Proton donor role is filled by His-20. Substrate-binding positions include Asp-28, His-96, and 118-120 (YAN).

The protein belongs to the RbsD / FucU family. RbsD subfamily. Homodecamer.

It localises to the cytoplasm. It carries out the reaction beta-D-ribopyranose = beta-D-ribofuranose. Its pathway is carbohydrate metabolism; D-ribose degradation; D-ribose 5-phosphate from beta-D-ribopyranose: step 1/2. Functionally, catalyzes the interconversion of beta-pyran and beta-furan forms of D-ribose. This is D-ribose pyranase from Staphylococcus saprophyticus subsp. saprophyticus (strain ATCC 15305 / DSM 20229 / NCIMB 8711 / NCTC 7292 / S-41).